The primary structure comprises 267 residues: Glucosamine-6-phosphate deaminase (267 aa).

Aspartate 72 functions as the Proton acceptor; for enolization step in the catalytic mechanism. Catalysis depends on aspartate 141, which acts as the For ring-opening step. Histidine 143 (proton acceptor; for ring-opening step) is an active-site residue. Glutamate 148 (for ring-opening step) is an active-site residue.

This sequence belongs to the glucosamine/galactosamine-6-phosphate isomerase family. NagB subfamily. In terms of assembly, homohexamer.

It catalyses the reaction alpha-D-glucosamine 6-phosphate + H2O = beta-D-fructose 6-phosphate + NH4(+). It participates in amino-sugar metabolism; N-acetylneuraminate degradation; D-fructose 6-phosphate from N-acetylneuraminate: step 5/5. With respect to regulation, allosterically activated by N-acetylglucosamine 6-phosphate (GlcNAc6P). Functionally, catalyzes the reversible isomerization-deamination of glucosamine 6-phosphate (GlcN6P) to form fructose 6-phosphate (Fru6P) and ammonium ion. The chain is Glucosamine-6-phosphate deaminase from Actinobacillus pleuropneumoniae serotype 3 (strain JL03).